The sequence spans 85 residues: Putative membrane protein insertion efficiency factor (85 aa).

The protein belongs to the UPF0161 family.

It localises to the cell inner membrane. In terms of biological role, could be involved in insertion of integral membrane proteins into the membrane. In Shewanella sediminis (strain HAW-EB3), this protein is Putative membrane protein insertion efficiency factor.